Consider the following 154-residue polypeptide: Sperm microtubule associated protein 1 (154 aa).

In Homo sapiens (Human), this protein is Sperm microtubule associated protein 1.